The sequence spans 119 residues: Large ribosomal subunit protein uL18 (119 aa).

Residues 1–26 (MGQNDKAARRQKIKLRSKTRGQGTAA) are disordered. A compositionally biased stretch (basic residues) spans 9 to 19 (RRQKIKLRSKT).

Belongs to the universal ribosomal protein uL18 family. As to quaternary structure, part of the 50S ribosomal subunit; part of the 5S rRNA/L5/L18/L25 subcomplex. Contacts the 5S and 23S rRNAs.

Functionally, this is one of the proteins that bind and probably mediate the attachment of the 5S RNA into the large ribosomal subunit, where it forms part of the central protuberance. This Prosthecochloris aestuarii (strain DSM 271 / SK 413) protein is Large ribosomal subunit protein uL18.